A 671-amino-acid polypeptide reads, in one-letter code: DEAD-box ATP-dependent RNA helicase 7 (671 aa).

The segment at 1 to 84 (MPSLMLSDKK…EKKKSSKKVK (84 aa)) is disordered. Residues 26 to 41 (LDSKKGKKEQKLKLSD) are compositionally biased toward basic and acidic residues. Ser-40 and Ser-42 each carry phosphoserine. A compositionally biased stretch (basic residues) spans 50–60 (KKSKKKDKKRK). Residues 96-124 (NAVSKFRISAPLREKLKANGIEALFPIQA) carry the Q motif motif. The 183-residue stretch at 127–309 (FDMVLDGADL…NRFLKRDQKT (183 aa)) folds into the Helicase ATP-binding domain. 140–147 (ARTGQGKT) contributes to the ATP binding site. The short motif at 255–258 (DEAD) is the DEAD box element. The 141-residue stretch at 339–479 (LIPDIISCYS…HLAAPQPDEI (141 aa)) folds into the Helicase C-terminal domain. The interval 627 to 671 (EREPLPQKRFGGGGRGNRFGGGGGNRFGGGGGRGRGGSGGRGQRY) is disordered. Positions 636–671 (FGGGGRGNRFGGGGGNRFGGGGGRGRGGSGGRGQRY) are enriched in gly residues.

The protein belongs to the DEAD box helicase family. DDX21/DDX50 subfamily.

It is found in the nucleus. It catalyses the reaction ATP + H2O = ADP + phosphate + H(+). This Arabidopsis thaliana (Mouse-ear cress) protein is DEAD-box ATP-dependent RNA helicase 7 (RH7).